Reading from the N-terminus, the 572-residue chain is Methionine--tRNA ligase (572 aa).

The short motif at 11–21 (PYVNHVPHLGT) is the 'HIGH' region element. 4 residues coordinate Zn(2+): cysteine 143, cysteine 146, cysteine 156, and cysteine 159. The 'KMSKS' region motif lies at 334 to 338 (QFSKS). Residue lysine 337 coordinates ATP.

The protein belongs to the class-I aminoacyl-tRNA synthetase family. MetG type 1 subfamily. The cofactor is Zn(2+).

Its subcellular location is the cytoplasm. It catalyses the reaction tRNA(Met) + L-methionine + ATP = L-methionyl-tRNA(Met) + AMP + diphosphate. Its function is as follows. Is required not only for elongation of protein synthesis but also for the initiation of all mRNA translation through initiator tRNA(fMet) aminoacylation. This is Methionine--tRNA ligase (metG) from Aeropyrum pernix (strain ATCC 700893 / DSM 11879 / JCM 9820 / NBRC 100138 / K1).